Reading from the N-terminus, the 136-residue chain is Peptide methionine sulfoxide reductase MsrB (136 aa).

Residues 7–129 form the MsrB domain; the sequence is SSSHENTLTE…NSASLSFTDD (123 aa). Zn(2+)-binding residues include C46, C49, C95, and C98. Catalysis depends on C118, which acts as the Nucleophile.

It belongs to the MsrB Met sulfoxide reductase family. Requires Zn(2+) as cofactor.

The catalysed reaction is L-methionyl-[protein] + [thioredoxin]-disulfide + H2O = L-methionyl-(R)-S-oxide-[protein] + [thioredoxin]-dithiol. This chain is Peptide methionine sulfoxide reductase MsrB, found in Erwinia tasmaniensis (strain DSM 17950 / CFBP 7177 / CIP 109463 / NCPPB 4357 / Et1/99).